Consider the following 63-residue polypeptide: Alpha-conotoxin-like Sm1.3 (63 aa).

A signal peptide spans M1 to S16. Positions S17 to K43 are excised as a propeptide. 2 cysteine pairs are disulfide-bonded: C45-C51 and C46-C59. Position 58 is a methionine sulfoxide; partial (M58). C59 is modified (cysteine amide; partial).

The protein belongs to the conotoxin A superfamily. Expressed by the venom duct.

It localises to the secreted. Its function is as follows. Alpha-conotoxins act on postsynaptic membranes, they bind to the nicotinic acetylcholine receptors (nAChR) and thus inhibit them. The protein is Alpha-conotoxin-like Sm1.3 of Conus stercusmuscarum (Fly-specked cone).